The primary structure comprises 388 residues: Acetate kinase (388 aa).

Asparagine 14 serves as a coordination point for Mg(2+). Lysine 21 contributes to the ATP binding site. Residue arginine 80 coordinates substrate. Aspartate 137 acts as the Proton donor/acceptor in catalysis. ATP-binding positions include 197 to 201, 271 to 273, and 319 to 323; these read HLGNG, DFR, and GIGEH. Position 373 (glutamate 373) interacts with Mg(2+).

Belongs to the acetokinase family. In terms of assembly, homodimer. Mg(2+) serves as cofactor. Requires Mn(2+) as cofactor.

The protein resides in the cytoplasm. It catalyses the reaction acetate + ATP = acetyl phosphate + ADP. Its pathway is metabolic intermediate biosynthesis; acetyl-CoA biosynthesis; acetyl-CoA from acetate: step 1/2. In terms of biological role, catalyzes the formation of acetyl phosphate from acetate and ATP. Can also catalyze the reverse reaction. The protein is Acetate kinase of Mycobacterium marinum (strain ATCC BAA-535 / M).